The primary structure comprises 639 residues: MTGMPQTPLLDRVNFPSDLKEIDDRDLPELARELRDEMIDAVSKTGGHLGAGLGVVELTIAIHKVFNTPEDRLIFDVGHQCYPHKILTGRRDRIRTLRQEDGLSGFTRRAESEYDDFGAGHSSTSISAGLGMAVAAGLDGSDRKVIAVIGDGSMSAGMAFEALNNAGALDARLIVILNDNDMSIAPPTGAMSAYLARLASGRTYMGFRDFGKKLTAYLGKTIDRAITRAVTHARGYVTGGTLFEELGFYHIGPIDGHSFDHLLPVLRNVRDNQKGPVLIHVVTQKGKGYAPAEAAADKYHGVNKFDVITGAQAKAKPNAPSYTSVFAEALIQEATLDEKIIGVTAAMPNGTGLDKMAELFPSRTFDVGIAEQHAVTFAAGLAADGYKPFCALYSTFLQRGYDQLVHDVAIQSLPVRFPIDRAGFVGADGPTHAGSFDTTFLATLPGMVVMAAADEAELKHMVRTAAAYDEGPISFRYPRGEGVGVEMPARGEILQIGKGRIIKEGTKVALLSFGTRLAECLAAAEDLDAAGLSTTVADARFAKPLDLDLIRQLAAHHEVLVTIEEGSVGGFGAHVLHFMASAGLLDHGPKVRTLTLPDQWVEQAKPETMYANAGLDRAGIVSTVFNALGQRQAGVGFAG.

Thiamine diphosphate contacts are provided by residues His-79 and 120–122 (GHS). Mg(2+) is bound at residue Asp-151. Residues 152-153 (GS), Asn-180, Tyr-289, and Glu-371 each bind thiamine diphosphate. Position 180 (Asn-180) interacts with Mg(2+).

It belongs to the transketolase family. DXPS subfamily. As to quaternary structure, homodimer. It depends on Mg(2+) as a cofactor. Thiamine diphosphate is required as a cofactor.

The catalysed reaction is D-glyceraldehyde 3-phosphate + pyruvate + H(+) = 1-deoxy-D-xylulose 5-phosphate + CO2. The protein operates within metabolic intermediate biosynthesis; 1-deoxy-D-xylulose 5-phosphate biosynthesis; 1-deoxy-D-xylulose 5-phosphate from D-glyceraldehyde 3-phosphate and pyruvate: step 1/1. Catalyzes the acyloin condensation reaction between C atoms 2 and 3 of pyruvate and glyceraldehyde 3-phosphate to yield 1-deoxy-D-xylulose-5-phosphate (DXP). This Agrobacterium fabrum (strain C58 / ATCC 33970) (Agrobacterium tumefaciens (strain C58)) protein is 1-deoxy-D-xylulose-5-phosphate synthase.